We begin with the raw amino-acid sequence, 557 residues long: Aerobic glycerol-3-phosphate dehydrogenase (557 aa).

Position 21 to 49 (21 to 49) interacts with FAD; sequence DLVIIGGGITGAGIALDASERGMKVALVE.

The protein belongs to the FAD-dependent glycerol-3-phosphate dehydrogenase family. FAD is required as a cofactor.

It is found in the cytoplasm. The enzyme catalyses a quinone + sn-glycerol 3-phosphate = dihydroxyacetone phosphate + a quinol. Its pathway is polyol metabolism; glycerol degradation via glycerol kinase pathway; glycerone phosphate from sn-glycerol 3-phosphate (aerobic route): step 1/1. This is Aerobic glycerol-3-phosphate dehydrogenase (glpD) from Staphylococcus aureus (strain MRSA252).